Here is a 1250-residue protein sequence, read N- to C-terminus: Cell adhesion molecule-related/down-regulated by oncogenes (1250 aa).

Positions 1–24 are cleaved as a signal peptide; the sequence is MHPDLGPLWTLLYVLVILCSSVSS. Over 25 to 962 the chain is Extracellular; it reads DLAPYFISEP…SPARSSDMLY (938 aa). Ig-like C2-type domains follow at residues 28–113, 119–203, 224–302, 309–395, and 404–515; these read PYFI…ATVS, DFDS…LKVE, PALS…KHVT, EHAS…GRLQ, and PVIV…AFLT. A disulfide bridge connects residues Cys-49 and Cys-96. Asn-99, Asn-179, Asn-286, Asn-293, Asn-341, and Asn-426 each carry an N-linked (GlcNAc...) asparagine glycan. Disulfide bonds link Cys-140–Cys-190 and Cys-242–Cys-289. 2 disulfides stabilise this stretch: Cys-332–Cys-379 and Cys-425–Cys-499. Positions 524-534 are enriched in polar residues; sequence KAESVTPSEAS. The tract at residues 524–547 is disordered; sequence KAESVTPSEASQNDERDPQDGSES. Asn-569 carries an N-linked (GlcNAc...) asparagine glycan. Fibronectin type-III domains lie at 572–673, 719–814, and 822–922; these read VPDA…SKEK, APDR…VAGF, and PITG…TKVK. Asn-869 carries N-linked (GlcNAc...) asparagine glycosylation. The interval 929-951 is disordered; the sequence is DYPVKELSTPPSSSGNAGNVGPA. A helical transmembrane segment spans residues 963 to 983; sequence LIVGCVLGVMVLILMVFIALC. Topologically, residues 984-1250 are cytoplasmic; sequence LWKSRQQSTI…SVVLQQAQET (267 aa). Disordered regions lie at residues 1178 to 1208 and 1223 to 1250; these read DNIS…AEDK and DCGE…AQET. Positions 1193–1208 are enriched in basic and acidic residues; the sequence is EFSRGDSSGHSEAEDK.

Part of a complex that contains BOC, CDON, NEO1, cadherins and CTNNB1. Interacts with NTN3. Interacts with DHH, IHH and SHH. Post-translationally, N-glycosylated. Highly expressed in somites and the dorsal lips of the neural tube during embryogenesis. Detected at very low levels in adult tissues.

The protein localises to the cell membrane. Its function is as follows. Component of a cell-surface receptor complex that mediates cell-cell interactions between muscle precursor cells. Promotes differentiation of myogenic cells. Required for response to NTN3 and activation of NFATC3. In Mus musculus (Mouse), this protein is Cell adhesion molecule-related/down-regulated by oncogenes (Cdon).